The primary structure comprises 296 residues: Cytidine deaminase (296 aa).

CMP/dCMP-type deaminase domains follow at residues 47-167 (SQDE…FGPA) and 186-296 (ESAD…VDPV). 88–90 (NLE) serves as a coordination point for substrate. H101 serves as a coordination point for Zn(2+). The active-site Proton donor is E103. Zn(2+)-binding residues include C128 and C131.

The protein belongs to the cytidine and deoxycytidylate deaminase family. Homodimer. Zn(2+) is required as a cofactor.

It catalyses the reaction cytidine + H2O + H(+) = uridine + NH4(+). The enzyme catalyses 2'-deoxycytidine + H2O + H(+) = 2'-deoxyuridine + NH4(+). In terms of biological role, this enzyme scavenges exogenous and endogenous cytidine and 2'-deoxycytidine for UMP synthesis. In Shewanella loihica (strain ATCC BAA-1088 / PV-4), this protein is Cytidine deaminase.